The chain runs to 152 residues: Ribosome maturation factor RimP (152 aa).

Belongs to the RimP family.

It localises to the cytoplasm. Its function is as follows. Required for maturation of 30S ribosomal subunits. This chain is Ribosome maturation factor RimP, found in Alkaliphilus metalliredigens (strain QYMF).